The primary structure comprises 41 residues: Large ribosomal subunit protein bL36 (41 aa).

This sequence belongs to the bacterial ribosomal protein bL36 family.

This is Large ribosomal subunit protein bL36 from Nitrobacter hamburgensis (strain DSM 10229 / NCIMB 13809 / X14).